The following is a 1038-amino-acid chain: Importin-7 (1038 aa).

Met-1 is subject to N-acetylmethionine. An Importin N-terminal domain is found at 22 to 101 (AERQLNEAHK…RENIVEAIIH (80 aa)). A disordered region spans residues 881–910 (EHENDSDDDEDAEDDDETEELGSDEDDIDE). The segment covering 884 to 910 (NDSDDDEDAEDDDETEELGSDEDDIDE) has biased composition (acidic residues). Ser-886 bears the Phosphoserine mark. Thr-898 is modified (phosphothreonine). Residues Ser-903 and Ser-1020 each carry the phosphoserine modification.

The protein belongs to the importin beta family. In terms of assembly, forms a heterodimer with KPNB1. Interacts with histone H1. Interacts with H2A, H2B, H3 and H4 histones. Interacts with SNUPN and XPO1. Interacts with RPS7 and RPL5. Interacts with RPL23A (via BIB domain). Binds directly to nuclear pore complexes. Interacts with SMAD4 and NUP93; translocates SMAD4 to the nucleus through the NPC upon BMP7 stimulation resulting in activation of SMAD4 signaling. Interacts with phosphorylated SMAD2; the interaction facilitates translocation of SMAD2 to the nucleus. Interacts with SRP19. Interacts with RUNX2; the interaction inhibits RUNX2 nuclear translocation in osteoblasts. Interacts with HDAC6, DLX3 and KLF4; the interaction facilitates HDAC6, DLX3 and KLF4 nuclear translocation in dental papilla cells.

Its subcellular location is the cytoplasm. It localises to the nucleus. In terms of biological role, functions in nuclear protein import, either by acting as autonomous nuclear transport receptor or as an adapter-like protein in association with the importin-beta subunit KPNB1. Acting autonomously is thought to serve itself as receptor for nuclear localization signals (NLS) and to promote translocation of import substrates through the nuclear pore complex (NPC) by an energy requiring, Ran-dependent mechanism. At the nucleoplasmic side of the NPC, Ran binds to importin, the importin/substrate complex dissociates and importin is re-exported from the nucleus to the cytoplasm where GTP hydrolysis releases Ran. Mediates autonomously the nuclear import of ribosomal proteins RPL23A, RPS7 and RPL5. In association with KPNB1 mediates the nuclear import of H1 histone and the Ran-binding site of IPO7 is not required but synergizes with that of KPNB1 in importin/substrate complex dissociation. Promotes odontoblast differentiation via promoting nuclear translocation of DLX3, KLF4, SMAD2, thereby facilitating the transcription of target genes that play a role in odontoblast differentiation. Facilitates BMP4-induced translocation of SMAD1 to the nucleus and recruitment to the MSX1 gene promoter, thereby promotes the expression of the odontogenic regulator MSX1 in dental mesenchymal cells. Also promotes odontoblast differentiation by facilitating the nuclear translocation of HDAC6 and subsequent repression of RUNX2 expression. Inhibits osteoblast differentiation by inhibiting nuclear translocation of RUNX2 and therefore inhibition of RUNX2 target gene transcription. In vitro, mediates nuclear import of H2A, H2B, H3 and H4 histones. The chain is Importin-7 (Ipo7) from Mus musculus (Mouse).